A 569-amino-acid polypeptide reads, in one-letter code: Santalene synthase (569 aa).

(2E)-geranyl diphosphate-binding residues include arginine 284, aspartate 321, aspartate 325, and arginine 460. Positions 321 and 325 each coordinate Mg(2+). The short motif at 321-325 (DDGYD) is the DDXXD motif element. Mg(2+) is bound by residues asparagine 463, threonine 467, and glutamate 471.

This sequence belongs to the terpene synthase family. Tpsb subfamily. The cofactor is Mg(2+). It depends on Mn(2+) as a cofactor.

It catalyses the reaction (2E,6E)-farnesyl diphosphate = (1S,5S,6R)-alpha-bergamotene + diphosphate. It carries out the reaction (2E,6E)-farnesyl diphosphate = (+)-alpha-santalene + diphosphate. The catalysed reaction is (2E,6E)-farnesyl diphosphate = (-)-beta-santalene + diphosphate. Its function is as follows. Catalyzes a mixture of sesquiterpenoids from (2E,6E)-farnesyl diphosphate in fragrance biosynthesis. Catalyzes the formation of alpha-santalene, beta-santalene, epi-beta-santalene and exo-alpha-bergamotene, as well as traces of alpha-farnesene and beta-farnesene. Also acts with (Z,Z)-farnesyl diphosphate isomer, producing alpha-endo-bergamotene, alpha-santalene, (Z)-beta-farnesene, epi-beta-santalene, and beta-santalene. The polypeptide is Santalene synthase (Santalum album (White sandalwood)).